The primary structure comprises 354 residues: Guanine nucleotide-binding protein alpha-16 subunit (354 aa).

Gly2 carries the N-myristoyl glycine lipid modification. Cys3 is lipidated: S-palmitoyl cysteine. In terms of domain architecture, G-alpha spans 31 to 354 (KTVKLLLLGA…RDNLRTCGLY (324 aa)). Residues 34-47 (KLLLLGAGESGKST) are G1 motif. GTP is bound by residues 39–46 (GAGESGKS), 174–180 (LRTRIKT), 199–203 (DVGGQ), 268–271 (NKKD), and Ala326. Mg(2+) contacts are provided by Ser46 and Thr180. The G2 motif stretch occupies residues 172 to 180 (DVLRTRIKT). Positions 195–204 (FVVFDVGGQR) are G3 motif. Residues 264–271 (ILFLNKKD) are G4 motif. Residues 324–329 (TCATDT) form a G5 motif region.

It belongs to the G-alpha family. G proteins are composed of 3 units; alpha, beta and gamma. The alpha chain contains the guanine nucleotide binding site.

Guanine nucleotide-binding proteins (G proteins) are involved as modulators or transducers in various transmembrane signaling systems. In the 1-cell embryo, probably together with goa-1, controls nuclear rotation and spindle elongation during mitosis. During the first embryonic cell divisons, plays a role in gpr-1/2 cortical localization and in the proper orientation of EMS blastomere mitotic spindle. The protein is Guanine nucleotide-binding protein alpha-16 subunit (gpa-16) of Caenorhabditis briggsae.